The primary structure comprises 385 residues: S-adenosylmethionine synthase (385 aa).

Position 16 (His-16) interacts with ATP. Asp-18 is a binding site for Mg(2+). Glu-44 serves as a coordination point for K(+). 2 residues coordinate L-methionine: Glu-57 and Gln-100. Positions 100–110 are flexible loop; that stretch reads QSPDINQGVDR. ATP is bound by residues 164-166, 230-231, Asp-239, 245-246, Ala-262, and Lys-266; these read DGK, KF, and RK. An L-methionine-binding site is contributed by Asp-239. Residue Lys-270 coordinates L-methionine.

This sequence belongs to the AdoMet synthase family. In terms of assembly, homotetramer; dimer of dimers. Requires Mg(2+) as cofactor. The cofactor is K(+).

It is found in the cytoplasm. It carries out the reaction L-methionine + ATP + H2O = S-adenosyl-L-methionine + phosphate + diphosphate. It participates in amino-acid biosynthesis; S-adenosyl-L-methionine biosynthesis; S-adenosyl-L-methionine from L-methionine: step 1/1. Its function is as follows. Catalyzes the formation of S-adenosylmethionine (AdoMet) from methionine and ATP. The overall synthetic reaction is composed of two sequential steps, AdoMet formation and the subsequent tripolyphosphate hydrolysis which occurs prior to release of AdoMet from the enzyme. The chain is S-adenosylmethionine synthase from Helicobacter pylori (strain Shi470).